Here is a 338-residue protein sequence, read N- to C-terminus: Phosphate transport system permease protein PstC 1 (338 aa).

8 helical membrane passes run 19–39 (GGIG…VLVI), 93–113 (TSAI…LVIV), 123–143 (AVGI…GLWG), 144–164 (AMTF…HNAP), 181–201 (GMLV…ATTT), 232–252 (LPWV…RALG), 254–274 (TMAV…NIYA), and 295–315 (TNFA…ITLL). Residues 87-320 (IVGTLATSAI…VITLLTNVAA (234 aa)) form the ABC transmembrane type-1 domain.

This sequence belongs to the binding-protein-dependent transport system permease family. CysTW subfamily.

It is found in the cell membrane. Its function is as follows. Part of the binding-protein-dependent transport system for phosphate; probably responsible for the translocation of the substrate across the membrane. In Mycobacterium bovis (strain ATCC BAA-935 / AF2122/97), this protein is Phosphate transport system permease protein PstC 1 (pstC1).